A 421-amino-acid polypeptide reads, in one-letter code: MVPSVMEGAPQLGITSTDTSSAGVPPGLKLIPTDRLDRRTDEEIAAWLQTRHPVTSDKNVWAFWHNGYTNMPPWVQRNIINWVRRLGPDWTVHLLDRVDGSATNVSHYVDSSFFPECFNNNTMDGPTVGQHSGDLVRLPLLWLYGGIWIDAGSFLFRHVEDICWNKIEDPESPYEMAGFVIEMRPGVEVMLNGFIAAKRGNPFIKRWLEIFKKLWDGATNVQGFHKHPLLRHLPMLCPPIDKLNLPPQGLNVVMEQFTDYMSQIMSFERLRKLVDPSDGFNGPEYYSNKMLLCSALQETFYFQLVTEWSGTKQFNLLSTKRKGEGVVKDENWHAAENFVHDALANTATMKLSHGPPGALDSFLADLWDSEEHHGKDNEDGTFAAYLRYGSVHFDQTREMVPIKMGWPDEEVLEAGVLEPKK.

Residues 1-26 form a disordered region; that stretch reads MVPSVMEGAPQLGITSTDTSSAGVPP. A compositionally biased stretch (polar residues) spans 13–22; that stretch reads GITSTDTSSA.

Belongs to the afumC glycosyltransferase family.

The protein operates within secondary metabolite biosynthesis. In terms of biological role, O-glycosyltransferase; part of the gene cluster that mediates the biosynthesis of the brasilane terpene glycosides brasilane D and E. The biosynthesis starts with the activity of the terpene cyclase braA that converts farnesyl pyrophosphate into the sesquiterpene alcohol trichobrasilenol. Subsequently, trichobrasilenol is glycosylated by the O-glycosyltransferase braB putatively using UDP-GlcNAc as sugar donor to yield brasilane A. The latter then undergoes two rounds of oxidation performed by the cytochrome P450 monooxygenase braC. In the first round braC hydroxylates C-12 forming brasilane D, which serves as substrate in the second round to establish the epoxide at the bond between C-5 and C-10 and oxidize the alcohol at C-12 to an aldehyde leading to the final product brasilane E. BraB is also able to glycosylate geraniol, linalool, perillyl alcohol, 3,4-dichlorophenol and, to a lesser extend, benzyl alcohol. This Annulohypoxylon truncatum (Hypoxylon truncatum) protein is O-glycosyltransferase braB.